We begin with the raw amino-acid sequence, 122 residues long: Large ribosomal subunit protein uL22 (122 aa).

Residues 102–122 form a disordered region; that stretch reads VAEGKEMKSSKSHKKNQAEGK.

This sequence belongs to the universal ribosomal protein uL22 family. In terms of assembly, part of the 50S ribosomal subunit.

This protein binds specifically to 23S rRNA; its binding is stimulated by other ribosomal proteins, e.g. L4, L17, and L20. It is important during the early stages of 50S assembly. It makes multiple contacts with different domains of the 23S rRNA in the assembled 50S subunit and ribosome. Functionally, the globular domain of the protein is located near the polypeptide exit tunnel on the outside of the subunit, while an extended beta-hairpin is found that lines the wall of the exit tunnel in the center of the 70S ribosome. This is Large ribosomal subunit protein uL22 from Helicobacter pylori (strain HPAG1).